The following is a 126-amino-acid chain: Small ribosomal subunit protein bS6 (126 aa).

Positions 101–126 are disordered; that stretch reads VMMKAKEERSAKREDAAPRAEEAAAE. Positions 104 to 126 are enriched in basic and acidic residues; it reads KAKEERSAKREDAAPRAEEAAAE.

Belongs to the bacterial ribosomal protein bS6 family.

Binds together with bS18 to 16S ribosomal RNA. This is Small ribosomal subunit protein bS6 from Aliivibrio fischeri (strain ATCC 700601 / ES114) (Vibrio fischeri).